The primary structure comprises 440 residues: MRKIIVVGAVAGGATCASQIRRLDKDSEITIFEKDRDMSFANCGLPYFIGNIVNERKDVLPITPDVFKEKKDITVKTYHEVIAINDKDQTVTVVNRQTNEKFEASYDKLILSPGAGANSLGFDSDYIFTLRNMEDTDAIDQFIDQHQAKKALVVGAGYISLEVLENLYARGLDVTLIHRSEKVNKLMDQDMNQVIFDELDSRHIPYRLNEEIVSVKDHLVTFKSGIQEDFDIIIEGVGTHPHSKFIESSNVALDDKGFVKVNDKFETNIPNIYALGDVITSTYRHVNLPAQVPLAWGAHRGASVIAEQLAGNKNIIFKGFLGTNIVKFFDYTLASVGIKVEELTHFDYQMVELNSGTHAGYYPGNTNVHLRVYFDTNNRHLLRAAAVGKTGVDKRIDVLSMAMMSELTIDELTEFEVAYAPPYSHPKDLVNMIGYKARDL.

8 to 33 lines the FAD pocket; it reads GAVAGGATCASQIRRLDKDSEITIFE. 5 residues coordinate substrate: threonine 15, glutamine 19, arginine 22, serine 39, and asparagine 42. Catalysis depends on cysteine 43, which acts as the Nucleophile. Residue cysteine 43 is the Redox-active of the active site. Residue lysine 71 coordinates substrate. Position 151–166 (151–166) interacts with NADP(+); it reads ALVVGAGYISLEVLEN. 267–277 is a binding site for FAD; sequence TNIPNIYALGD. A substrate-binding site is contributed by histidine 299. Tyrosine 419 is a binding site for FAD. Lysine 427 is a binding site for substrate.

It belongs to the class-III pyridine nucleotide-disulfide oxidoreductase family. As to quaternary structure, homodimer. FAD serves as cofactor.

The enzyme catalyses NADP(+) + 2 CoA = CoA-disulfide + NADPH + H(+). Catalyzes specifically the NADPH-dependent reduction of coenzyme A disulfide. This Staphylococcus haemolyticus (strain JCSC1435) protein is Coenzyme A disulfide reductase.